Consider the following 589-residue polypeptide: Serine/threonine-protein kinase PknJ (589 aa).

At 1–342 (MAHELSAGSV…LPRRPRRYRR (342 aa)) the chain is on the cytoplasmic side. Positions 14-276 (YRIERMLGAG…SAGEFAHAAA (263 aa)) constitute a Protein kinase domain. ATP-binding positions include 20-28 (LGAGGMGTV) and K43. D136 functions as the Proton acceptor in the catalytic mechanism. A helical transmembrane segment spans residues 343-363 (GVAAVAAVMVVAAAAVTAVTM). Residues 364–589 (TSHQPRTATP…TNYILAKIPG (226 aa)) are Extracellular-facing. Positions 365-387 (SHQPRTATPPSAAALSPTSSSTT) are enriched in low complexity. The tract at residues 365-400 (SHQPRTATPPSAAALSPTSSSTTPPQPPIVTRSRLP) is disordered.

This sequence belongs to the protein kinase superfamily. Ser/Thr protein kinase family. Homodimer.

Its subcellular location is the cell membrane. The enzyme catalyses L-seryl-[protein] + ATP = O-phospho-L-seryl-[protein] + ADP + H(+). It carries out the reaction L-threonyl-[protein] + ATP = O-phospho-L-threonyl-[protein] + ADP + H(+). The chain is Serine/threonine-protein kinase PknJ (pknJ) from Mycobacterium bovis (strain ATCC BAA-935 / AF2122/97).